A 742-amino-acid polypeptide reads, in one-letter code: MKIDSNGIVNPHSITNEIPSYDEKQAVDLNGNAFAPNGTFQKKDLISHKNDFERTMRHDVLHTNPKIEVRSETHIYEPNDSLFKENQDFPSNPTAHSPSSSSNDSVITATGVPDGILRDSPIVSALEPPSSNSSSSPQLQNLKHQLSSPQPSRAPIDRSSSNPVTSSQQPPNDRSTLSSSQKAKRPLKRSYSEKNSSNAEPSGSRSGDRGTNVSTSGSLLDGIPPDIGSASWAEAVKQKRVNMRRRREELDDECVLVGTRVSEGHENYVTAYNMLTGIRVGVSRCQAKMDRELTPADFTARHKFTFDITGNELTPSAKYDFKFKDYAPWVFRHLRQLFHLDAADYLVSLTSKYILSELDSPGKSGSFFYFSRDYRFIIKTIHHSEHKFLREILYDYYEHVKNNPNTLISQFYGLHRVKLPFGRKIHFVVMNNLFPPHRDIHQTFDLKGSTLGRELDENQPCQSPMCTMKDTNWIRRNMHLQFGPLKRQIFLTQVKADIDMLSSLGIMDYSLLVGIHDLSRGNRDKIRNSILSVYDPNVSQHRVPSINGNESHSNVHVIRQVVNSTGPVSLDQSCNLLPTDQFVERRNFMFYSDDGGFQATDENNEPGNFIFYIGIIDLLTKYSYVKRVEHLWKGINHSDSVISAVPPAEYASRFYKFVESSIKPTLLVLKPFPLKPQDGQRVNKQQSVNAGNVRTNNKHGSLNNNTAPSSRNAKSTSAHKSPKTEHRFPFPCRNVTTNTSSS.

Disordered regions lie at residues 1-21 and 82-228; these read MKID…IPSY and LFKE…PDIG. Composition is skewed to low complexity over residues 90-105 and 129-142; these read PSNP…SNDS and PSSN…LQNL. 2 stretches are compositionally biased toward polar residues: residues 158 to 181 and 193 to 218; these read RSSS…SSSQ and EKNS…TSGS. The region spanning 264–662 is the PIPK domain; that stretch reads GHENYVTAYN…RFYKFVESSI (399 aa). The tract at residues 677–742 is disordered; the sequence is QDGQRVNKQQ…RNVTTNTSSS (66 aa). The segment covering 680–719 has biased composition (polar residues); it reads QRVNKQQSVNAGNVRTNNKHGSLNNNTAPSSRNAKSTSAH.

As to quaternary structure, interacts with opy1 (via domain PH 1); the interaction is direct but opy1 does not appear to regulate its3 localization or function. Post-translationally, phosphorylated by casein kinase I. Phosphorylation inactivates the enzyme.

Its subcellular location is the cell membrane. The enzyme catalyses a 1,2-diacyl-sn-glycero-3-phospho-(1D-myo-inositol 4-phosphate) + ATP = a 1,2-diacyl-sn-glycero-3-phospho-(1D-myo-inositol-4,5-bisphosphate) + ADP + H(+). Functionally, catalyzes the phosphorylation of phosphatidylinositol 4-phosphate on the fifth hydroxyl of the myo-inositol ring, to form phosphatidylinositol 4,5-bisphosphate. Involved, together with the calcineurin ppb1, in cytokinesis. The sequence is that of Phosphatidylinositol 4-phosphate 5-kinase its3 (its3) from Schizosaccharomyces pombe (strain 972 / ATCC 24843) (Fission yeast).